A 294-amino-acid chain; its full sequence is P32 adhesin (294 aa).

2 consecutive transmembrane segments (helical) span residues 11–31 (LVGV…VGLT) and 66–86 (VVGA…GIGI). Tandem repeats lie at residues 172-193 (GGPM…PPQM) and 194-214 (GGMP…PPQM). A 2 X 22 AA repeats region spans residues 172–214 (GGPMQPNQMGMRPGFNQMPPQMGGMPPNQMGMRPGFNQMPPQM). The tract at residues 234–294 (RPGFRPQPGG…AGFPPQNGPR (61 aa)) is disordered. A compositionally biased stretch (gly residues) spans 241-256 (PGGGVPMGNKAGGGFN).

The protein localises to the cell projection. The protein resides in the attachment organelle membrane. Functionally, adhesin necessary for successful cytadherence and virulence. The sequence is that of P32 adhesin (mgc2) from Mycoplasmoides gallisepticum (strain R(low / passage 15 / clone 2)) (Mycoplasma gallisepticum).